Here is a 422-residue protein sequence, read N- to C-terminus: Gamma-glutamyl phosphate reductase (422 aa).

It belongs to the gamma-glutamyl phosphate reductase family.

The protein resides in the cytoplasm. It carries out the reaction L-glutamate 5-semialdehyde + phosphate + NADP(+) = L-glutamyl 5-phosphate + NADPH + H(+). Its pathway is amino-acid biosynthesis; L-proline biosynthesis; L-glutamate 5-semialdehyde from L-glutamate: step 2/2. Catalyzes the NADPH-dependent reduction of L-glutamate 5-phosphate into L-glutamate 5-semialdehyde and phosphate. The product spontaneously undergoes cyclization to form 1-pyrroline-5-carboxylate. This chain is Gamma-glutamyl phosphate reductase, found in Chloroflexus aggregans (strain MD-66 / DSM 9485).